Reading from the N-terminus, the 393-residue chain is 1-deoxy-D-xylulose 5-phosphate reductoisomerase (393 aa).

NADPH-binding residues include Thr-16, Gly-17, Ser-18, Ile-19, Ala-42, Arg-43, Asn-44, and Asn-127. Lys-128 contributes to the 1-deoxy-D-xylulose 5-phosphate binding site. Residue Glu-129 participates in NADPH binding. Asp-153 is a binding site for Mn(2+). 1-deoxy-D-xylulose 5-phosphate contacts are provided by Ser-154, Glu-155, Ser-179, and His-202. Residue Glu-155 coordinates Mn(2+). Gly-208 is a binding site for NADPH. Residues Ser-215, Asn-220, Lys-221, and Glu-224 each coordinate 1-deoxy-D-xylulose 5-phosphate. Glu-224 contributes to the Mn(2+) binding site.

The protein belongs to the DXR family. It depends on Mg(2+) as a cofactor. The cofactor is Mn(2+).

It carries out the reaction 2-C-methyl-D-erythritol 4-phosphate + NADP(+) = 1-deoxy-D-xylulose 5-phosphate + NADPH + H(+). It functions in the pathway isoprenoid biosynthesis; isopentenyl diphosphate biosynthesis via DXP pathway; isopentenyl diphosphate from 1-deoxy-D-xylulose 5-phosphate: step 1/6. Its function is as follows. Catalyzes the NADPH-dependent rearrangement and reduction of 1-deoxy-D-xylulose-5-phosphate (DXP) to 2-C-methyl-D-erythritol 4-phosphate (MEP). The chain is 1-deoxy-D-xylulose 5-phosphate reductoisomerase from Jannaschia sp. (strain CCS1).